Reading from the N-terminus, the 172-residue chain is Adenine phosphoribosyltransferase (172 aa).

This sequence belongs to the purine/pyrimidine phosphoribosyltransferase family. In terms of assembly, homodimer.

Its subcellular location is the cytoplasm. It catalyses the reaction AMP + diphosphate = 5-phospho-alpha-D-ribose 1-diphosphate + adenine. It functions in the pathway purine metabolism; AMP biosynthesis via salvage pathway; AMP from adenine: step 1/1. Catalyzes a salvage reaction resulting in the formation of AMP, that is energically less costly than de novo synthesis. The protein is Adenine phosphoribosyltransferase of Parasynechococcus marenigrum (strain WH8102).